A 429-amino-acid polypeptide reads, in one-letter code: Adenylosuccinate synthetase (429 aa).

GTP contacts are provided by residues 12 to 18 (GDEGKGK) and 40 to 42 (GHT). Asp-13 functions as the Proton acceptor in the catalytic mechanism. Positions 13 and 40 each coordinate Mg(2+). IMP-binding positions include 13 to 16 (DEGK), 38 to 41 (NAGH), Thr-129, Arg-143, Gln-223, Thr-238, and Arg-302. The active-site Proton donor is His-41. Residue 298–304 (VVTGRKR) coordinates substrate. GTP contacts are provided by residues Arg-304, 330–332 (KLD), and 412–414 (STS).

Belongs to the adenylosuccinate synthetase family. Homodimer. Requires Mg(2+) as cofactor.

It localises to the cytoplasm. The catalysed reaction is IMP + L-aspartate + GTP = N(6)-(1,2-dicarboxyethyl)-AMP + GDP + phosphate + 2 H(+). The protein operates within purine metabolism; AMP biosynthesis via de novo pathway; AMP from IMP: step 1/2. Functionally, plays an important role in the de novo pathway of purine nucleotide biosynthesis. Catalyzes the first committed step in the biosynthesis of AMP from IMP. The chain is Adenylosuccinate synthetase from Brucella suis (strain ATCC 23445 / NCTC 10510).